The sequence spans 429 residues: Putative zinc metalloprotease aq_1964 (429 aa).

Histidine 17 is a Zn(2+) binding site. Glutamate 18 is a catalytic residue. Histidine 21 is a binding site for Zn(2+). Residues 88–110 form a helical membrane-spanning segment; the sequence is ILIALGGPLFNFLFTILVFALVY. The region spanning 189-265 is the PDZ domain; sequence TIKVPNVQKG…AIKLKILRNG (77 aa). The next 2 helical transmembrane spans lie at 369–391 and 406–428; these read IFNL…IEWL and RVGL…LRLL.

This sequence belongs to the peptidase M50B family. It depends on Zn(2+) as a cofactor.

The protein localises to the cell inner membrane. This chain is Putative zinc metalloprotease aq_1964, found in Aquifex aeolicus (strain VF5).